Reading from the N-terminus, the 300-residue chain is MQANSQFKTVALVGRSNTPGIGEPLTALATCIEKLGFEIAFEAETAQEIGVSRWPALQPAEIGARADVAIVLGGDGTMLGIGRQLAPYKTPLIGINHGRLGFITDIPFSDMREIIPQMLSGSFEREERSLLESRIMRDGQPIYHALAFNDVVVNRSGFSGMAELRVSVDGRFMYNQRSDGLIVATPTGSTAYALSSQGPILHPQLQGLVLVPIAPHALSNRPIVIPDDSKVSIQIISGRDVNVNFDMQSFTALELNDTIDVRRSRHTVPFLHPVGYSYYATLRKKLHWNEYPSHEDDPDD.

Aspartate 75 acts as the Proton acceptor in catalysis. Residues 75–76 (DG), 149–150 (ND), arginine 177, aspartate 179, 190–195 (TAYALS), alanine 214, and glutamine 248 contribute to the NAD(+) site.

Belongs to the NAD kinase family. A divalent metal cation serves as cofactor.

The protein localises to the cytoplasm. The catalysed reaction is NAD(+) + ATP = ADP + NADP(+) + H(+). Functionally, involved in the regulation of the intracellular balance of NAD and NADP, and is a key enzyme in the biosynthesis of NADP. Catalyzes specifically the phosphorylation on 2'-hydroxyl of the adenosine moiety of NAD to yield NADP. This Paraburkholderia phymatum (strain DSM 17167 / CIP 108236 / LMG 21445 / STM815) (Burkholderia phymatum) protein is NAD kinase.